Reading from the N-terminus, the 280-residue chain is Four and a half LIM domains protein 1 (280 aa).

At S2 the chain carries N-acetylserine. K4 is modified (N6-acetyllysine). Residues 7–31 (CHYCRDPLQGKKYVQKDGRHCCLKC) form a C4-type zinc finger. LIM zinc-binding domains are found at residues 40-92 (CVEC…CNKC), 101-153 (CKGC…CVTC), 162-212 (CVKC…CVDC), and 221-276 (CAGC…CPDC). K86 participates in a covalent cross-link: Glycyl lysine isopeptide (Lys-Gly) (interchain with G-Cter in SUMO2).

The protein resides in the cytoplasm. Functionally, may have an involvement in muscle development or hypertrophy. Isoform 2 binds to RBP-J and plays a negative regulatory role in the RBP-J-mediated transcription in mammalian systems. The polypeptide is Four and a half LIM domains protein 1 (Fhl1) (Rattus norvegicus (Rat)).